The chain runs to 99 residues: NADH-quinone oxidoreductase subunit K (99 aa).

3 helical membrane-spanning segments follow: residues 3-23, 28-48, and 59-79; these read PDNY…GVLL, IVVF…FVAF, and VVAF…LAII.

It belongs to the complex I subunit 4L family. As to quaternary structure, NDH-1 is composed of 14 different subunits. Subunits NuoA, H, J, K, L, M, N constitute the membrane sector of the complex.

Its subcellular location is the cell membrane. The catalysed reaction is a quinone + NADH + 5 H(+)(in) = a quinol + NAD(+) + 4 H(+)(out). Its function is as follows. NDH-1 shuttles electrons from NADH, via FMN and iron-sulfur (Fe-S) centers, to quinones in the respiratory chain. The immediate electron acceptor for the enzyme in this species is believed to be a menaquinone. Couples the redox reaction to proton translocation (for every two electrons transferred, four hydrogen ions are translocated across the cytoplasmic membrane), and thus conserves the redox energy in a proton gradient. In Mycobacterium sp. (strain KMS), this protein is NADH-quinone oxidoreductase subunit K.